The following is an 83-amino-acid chain: Three-finger toxin MALT0066C (83 aa).

The first 21 residues, 1-21 (MKTLLLTLVVVTIVCLDFGHT), serve as a signal peptide directing secretion. 4 cysteine pairs are disulfide-bonded: C24-C45, C38-C62, C64-C75, and C76-C81.

Belongs to the three-finger toxin family. Short-chain subfamily. Type I alpha-neurotoxin sub-subfamily. As to quaternary structure, dimer. In terms of tissue distribution, expressed by the venom gland.

It is found in the secreted. Functionally, binds to muscle nicotinic acetylcholine receptor (nAChR) and inhibit acetylcholine from binding to the receptor, thereby impairing neuromuscular transmission. In Micrurus altirostris (Uruguayan coral snake), this protein is Three-finger toxin MALT0066C.